The sequence spans 805 residues: ATP-dependent RNA helicase mak-5 (805 aa).

Residues 1 to 10 (MAVDKKRKNT) are compositionally biased toward basic residues. Disordered stretches follow at residues 1–33 (MAVD…KRPV) and 79–189 (VPKS…ELET). Positions 85 to 100 (EVEDDGEEFGGFDDEE) are enriched in acidic residues. Composition is skewed to basic and acidic residues over residues 110-119 (QEVKTSETKA), 126-143 (AKEK…EQQK), and 164-189 (KNAE…ELET). Positions 209-237 (SEWVPLDLSPRMISSIAKLRFSKPTVIQS) match the Q motif motif. One can recognise a Helicase ATP-binding domain in the interval 240-463 (IPEIMAGHDV…AGKSKFKATS (224 aa)). Residue 253-260 (ASTGSGKT) participates in ATP binding. The DEAD box signature appears at 372 to 375 (DEAD). Residues 390 to 406 (FKALDRPPVEENNEDQK) are compositionally biased toward basic and acidic residues. Residues 390–435 (FKALDRPPVEENNEDQKMGGTDEEGQEEEEEDSEEEEEEEEEHVNK) are disordered. The span at 410-431 (TDEEGQEEEEEDSEEEEEEEEE) shows a compositional bias: acidic residues. The Helicase C-terminal domain maps to 510 to 666 (YLYATLMLQP…NSGNNTKKLV (157 aa)). The segment at 729–751 (AGKWGGKGSSKKQKQKEAQQMSK) is disordered.

This sequence belongs to the DEAD box helicase family. DDX24/MAK5 subfamily.

It is found in the nucleus. Its subcellular location is the nucleolus. The enzyme catalyses ATP + H2O = ADP + phosphate + H(+). Its function is as follows. ATP-binding RNA helicase involved in the biogenesis of 60S ribosomal subunits and is required for the normal formation of 25S and 5.8S rRNAs. The chain is ATP-dependent RNA helicase mak-5 (mak-5) from Neurospora crassa (strain ATCC 24698 / 74-OR23-1A / CBS 708.71 / DSM 1257 / FGSC 987).